Reading from the N-terminus, the 631-residue chain is Putative meiotic phospholipase SPO1 (631 aa).

An N-terminal signal peptide occupies residues methionine 1 to alanine 17. The interval glutamine 24 to alanine 67 is required for lipid-binding and function in meiosis. Residues glutamine 24 to serine 631 enclose the PLA2c domain. Residues asparagine 233, asparagine 293, and asparagine 303 are each glycosylated (N-linked (GlcNAc...) asparagine). A helical transmembrane segment spans residues phenylalanine 376 to alanine 396. N-linked (GlcNAc...) asparagine glycosylation is found at asparagine 500, asparagine 536, asparagine 560, asparagine 563, and asparagine 572.

Belongs to the lysophospholipase family. Interacts with SPO23. Post-translationally, glycosylated.

The protein resides in the endoplasmic reticulum membrane. It is found in the nucleus membrane. Its function is as follows. Regulates spindle pole duplication in meiosis I, but not in mitosis. Required for meiosis I, meiosis II chromosome segregation and spore formation. Binds phosphatidylinositol (4)P mono- and polyphosphates. This chain is Putative meiotic phospholipase SPO1 (SPO1), found in Saccharomyces cerevisiae (strain ATCC 204508 / S288c) (Baker's yeast).